The primary structure comprises 517 residues: Protein BTN1 (517 aa).

The next 8 membrane-spanning stretches (helical) occupy residues leucine 24 to serine 44, glycine 57 to leucine 77, valine 88 to leucine 108, leucine 112 to leucine 132, leucine 146 to leucine 166, glycine 169 to threonine 189, proline 371 to phenylalanine 391, and serine 409 to valine 429.

Belongs to the battenin family.

It localises to the vacuole membrane. In terms of biological role, involved in vacuolar transport and vacuole pH homeostasis. Also required for cytokinesis. In Cryptococcus neoformans var. neoformans serotype D (strain B-3501A) (Filobasidiella neoformans), this protein is Protein BTN1 (BTN1).